We begin with the raw amino-acid sequence, 272 residues long: SKA complex subunit 1 homolog (272 aa).

The stretch at 48-75 forms a coiled coil; sequence ALSSMELQVQSIKDRLREETEAIPKAKK.

It belongs to the SKA1 family.

The polypeptide is SKA complex subunit 1 homolog (Arabidopsis thaliana (Mouse-ear cress)).